The primary structure comprises 82 residues: Host translation inhibitor 5b (82 aa).

In terms of biological role, involved in host translation shutoff without degradating host RNA. By suppressing host gene expression, facilitates the evasion from host type I interferon immune response. This Gallus gallus (Chicken) protein is Host translation inhibitor 5b.